Reading from the N-terminus, the 301-residue chain is Sulfate adenylyltransferase subunit 2 2 (301 aa).

Belongs to the PAPS reductase family. CysD subfamily. In terms of assembly, heterodimer composed of CysD, the smaller subunit, and CysN.

It catalyses the reaction sulfate + ATP + H(+) = adenosine 5'-phosphosulfate + diphosphate. The protein operates within sulfur metabolism; hydrogen sulfide biosynthesis; sulfite from sulfate: step 1/3. In terms of biological role, with CysN forms the ATP sulfurylase (ATPS) that catalyzes the adenylation of sulfate producing adenosine 5'-phosphosulfate (APS) and diphosphate, the first enzymatic step in sulfur assimilation pathway. APS synthesis involves the formation of a high-energy phosphoric-sulfuric acid anhydride bond driven by GTP hydrolysis by CysN coupled to ATP hydrolysis by CysD. The chain is Sulfate adenylyltransferase subunit 2 2 from Shewanella sediminis (strain HAW-EB3).